The sequence spans 198 residues: Small ribosomal subunit protein uS7 (198 aa).

This sequence belongs to the universal ribosomal protein uS7 family. As to quaternary structure, part of the 30S ribosomal subunit.

One of the primary rRNA binding proteins, it binds directly to 16S rRNA where it nucleates assembly of the head domain of the 30S subunit. Is located at the subunit interface close to the decoding center. This chain is Small ribosomal subunit protein uS7, found in Desulfurococcus mucosus (Desulfurococcus mobilis).